The following is a 1289-amino-acid chain: Pesticidal crystal protein Cry5Ab (1289 aa).

The tract at residues 1263-1289 is disordered; it reads PLPTDDQNSEGNTASSTNSDTSMNNNQ. Positions 1274 to 1289 are enriched in low complexity; it reads NTASSTNSDTSMNNNQ.

It belongs to the delta endotoxin family.

Endotoxin with nematicidal activity. This is Pesticidal crystal protein Cry5Ab (cry5Ab) from Bacillus thuringiensis subsp. darmstadiensis.